Consider the following 389-residue polypeptide: Succinate--CoA ligase [ADP-forming] subunit beta (389 aa).

Positions 9 to 236 (RDMFEAHGVP…KDAADPLEAK (228 aa)) constitute an ATP-grasp domain. ATP is bound by residues Lys45, 52–54 (GRG), Ala94, and Glu99. The Mg(2+) site is built by Asn191 and Asp205. Residues Asn256 and 318 to 320 (GIT) each bind substrate.

Belongs to the succinate/malate CoA ligase beta subunit family. Heterotetramer of two alpha and two beta subunits. Requires Mg(2+) as cofactor.

The catalysed reaction is succinate + ATP + CoA = succinyl-CoA + ADP + phosphate. It catalyses the reaction GTP + succinate + CoA = succinyl-CoA + GDP + phosphate. The protein operates within carbohydrate metabolism; tricarboxylic acid cycle; succinate from succinyl-CoA (ligase route): step 1/1. Its function is as follows. Succinyl-CoA synthetase functions in the citric acid cycle (TCA), coupling the hydrolysis of succinyl-CoA to the synthesis of either ATP or GTP and thus represents the only step of substrate-level phosphorylation in the TCA. The beta subunit provides nucleotide specificity of the enzyme and binds the substrate succinate, while the binding sites for coenzyme A and phosphate are found in the alpha subunit. This Paenarthrobacter aurescens (strain TC1) protein is Succinate--CoA ligase [ADP-forming] subunit beta.